Reading from the N-terminus, the 579-residue chain is UvrABC system protein C (579 aa).

Positions Asp12–Val89 constitute a GIY-YIG domain. In terms of domain architecture, UVR spans Gln193 to Val228.

This sequence belongs to the UvrC family. Interacts with UvrB in an incision complex.

It localises to the cytoplasm. The UvrABC repair system catalyzes the recognition and processing of DNA lesions. UvrC both incises the 5' and 3' sides of the lesion. The N-terminal half is responsible for the 3' incision and the C-terminal half is responsible for the 5' incision. This chain is UvrABC system protein C, found in Methanothermobacter thermautotrophicus (strain ATCC 29096 / DSM 1053 / JCM 10044 / NBRC 100330 / Delta H) (Methanobacterium thermoautotrophicum).